The chain runs to 201 residues: Probable chemoreceptor glutamine deamidase CheD 1 (201 aa).

The protein belongs to the CheD family.

The enzyme catalyses L-glutaminyl-[protein] + H2O = L-glutamyl-[protein] + NH4(+). Its function is as follows. Probably deamidates glutamine residues to glutamate on methyl-accepting chemotaxis receptors (MCPs), playing an important role in chemotaxis. The sequence is that of Probable chemoreceptor glutamine deamidase CheD 1 from Dechloromonas aromatica (strain RCB).